Here is a 55-residue protein sequence, read N- to C-terminus: Locustin (55 aa).

4 disulfide bridges follow: cysteine 5-cysteine 40, cysteine 7-cysteine 36, cysteine 10-cysteine 32, and cysteine 17-cysteine 54.

In terms of assembly, monomer. In terms of tissue distribution, stored in hemocyte granules and secreted into the hemolymph.

Its subcellular location is the secreted. In terms of biological role, has antibacterial activity against Gram-positive bacterium M.luteus. The protein is Locustin of Locusta migratoria (Migratory locust).